Consider the following 398-residue polypeptide: 1-deoxy-D-xylulose 5-phosphate reductoisomerase (398 aa).

Positions 10, 11, 12, 13, 36, 38, and 124 each coordinate NADPH. Residue Lys125 coordinates 1-deoxy-D-xylulose 5-phosphate. NADPH is bound at residue Glu126. Residue Asp150 participates in Mn(2+) binding. The 1-deoxy-D-xylulose 5-phosphate site is built by Ser151, Glu152, Ser186, and His209. Glu152 contacts Mn(2+). Gly215 contacts NADPH. Residues Ser222, Asn227, Lys228, and Glu231 each contribute to the 1-deoxy-D-xylulose 5-phosphate site. Residue Glu231 participates in Mn(2+) binding.

The protein belongs to the DXR family. As to quaternary structure, homodimer. The cofactor is Mg(2+). It depends on Mn(2+) as a cofactor.

The catalysed reaction is 2-C-methyl-D-erythritol 4-phosphate + NADP(+) = 1-deoxy-D-xylulose 5-phosphate + NADPH + H(+). It functions in the pathway isoprenoid biosynthesis; isopentenyl diphosphate biosynthesis via DXP pathway; isopentenyl diphosphate from 1-deoxy-D-xylulose 5-phosphate: step 1/6. Catalyzes the NADPH-dependent rearrangement and reduction of 1-deoxy-D-xylulose-5-phosphate (DXP) to 2-C-methyl-D-erythritol 4-phosphate (MEP). The sequence is that of 1-deoxy-D-xylulose 5-phosphate reductoisomerase from Pectobacterium atrosepticum (strain SCRI 1043 / ATCC BAA-672) (Erwinia carotovora subsp. atroseptica).